We begin with the raw amino-acid sequence, 476 residues long: Amidophosphoribosyltransferase (476 aa).

The propeptide occupies 1 to 11 (MLAEIKGLNEE). Cys-12 acts as the Nucleophile in catalysis. The region spanning 12-231 (CGVFGIWGHE…PGEMLIINDE (220 aa)) is the Glutamine amidotransferase type-2 domain. Residue Cys-247 participates in [4Fe-4S] cluster binding. Positions 294, 356, and 357 each coordinate Mg(2+). Residues Cys-393, Cys-448, and Cys-451 each coordinate [4Fe-4S] cluster.

It in the C-terminal section; belongs to the purine/pyrimidine phosphoribosyltransferase family. Homotetramer. Requires Mg(2+) as cofactor. The cofactor is [4Fe-4S] cluster.

The enzyme catalyses 5-phospho-beta-D-ribosylamine + L-glutamate + diphosphate = 5-phospho-alpha-D-ribose 1-diphosphate + L-glutamine + H2O. Its pathway is purine metabolism; IMP biosynthesis via de novo pathway; N(1)-(5-phospho-D-ribosyl)glycinamide from 5-phospho-alpha-D-ribose 1-diphosphate: step 1/2. Its activity is regulated as follows. Allosterically regulated; subject to end product regulation by purine nucleotides. Its function is as follows. Catalyzes the formation of phosphoribosylamine from phosphoribosylpyrophosphate (PRPP) and glutamine. The polypeptide is Amidophosphoribosyltransferase (Bacillus subtilis (strain 168)).